Reading from the N-terminus, the 473-residue chain is Serine palmitoyltransferase 1 (473 aa).

Residues 1-15 (MATVAEQWVLVEMVQ) are Lumenal-facing. The segment at 1–66 (MATVAEQWVL…KEELIEEWQP (66 aa)) is interaction with SPTLC2. The chain crosses the membrane as a helical span at residues 16 to 36 (ALYEAPAYHLILEGILILWII). Topologically, residues 37–473 (RLLFSKTYKL…ISEVAQTVLL (437 aa)) are cytoplasmic. Tyr-164 carries the post-translational modification Phosphotyrosine; by ABL.

It belongs to the class-II pyridoxal-phosphate-dependent aminotransferase family. As to quaternary structure, component of the serine palmitoyltransferase (SPT) complex, which is also composed of SPTLC2 or SPTLC3 and SPTSSA or SPTSSB. The heterodimer with SPTLC2 or SPTLC3 forms the catalytic core of the enzyme, while SPTSSA or SPTSSB subunits determine substrate specificity. SPT also interacts with ORMDL proteins, especially ORMDL3, which negatively regulate SPT activity in the presence of ceramides. Forms dimers of heterodimers with SPTLC2. Interacts with RTN4. Requires pyridoxal 5'-phosphate as cofactor. In terms of processing, phosphorylation at Tyr-164 inhibits activity and promotes cell survival.

Its subcellular location is the endoplasmic reticulum membrane. It catalyses the reaction L-serine + hexadecanoyl-CoA + H(+) = 3-oxosphinganine + CO2 + CoA. It carries out the reaction octadecanoyl-CoA + L-serine + H(+) = 3-oxoeicosasphinganine + CO2 + CoA. The catalysed reaction is tetradecanoyl-CoA + L-serine + H(+) = 3-oxohexadecasphinganine + CO2 + CoA. The enzyme catalyses dodecanoyl-CoA + L-serine + H(+) = 3-oxotetradecasphinganine + CO2 + CoA. It participates in lipid metabolism; sphingolipid metabolism. With respect to regulation, SPT complex catalytic activity is negatively regulated by ORMDL proteins, including ORMDL3, in the presence of ceramides. This mechanism allows to maintain ceramide levels at sufficient concentrations for the production of complex sphingolipids, but which prevents the accumulation of ceramides to levels that trigger apoptosis. Component of the serine palmitoyltransferase multisubunit enzyme (SPT) that catalyzes the initial and rate-limiting step in sphingolipid biosynthesis by condensing L-serine and activated acyl-CoA (most commonly palmitoyl-CoA) to form long-chain bases. The SPT complex is also composed of SPTLC2 or SPTLC3 and SPTSSA or SPTSSB. Within this complex, the heterodimer with SPTLC2 or SPTLC3 forms the catalytic core. The composition of the serine palmitoyltransferase (SPT) complex determines the substrate preference. The SPTLC1-SPTLC2-SPTSSA complex shows a strong preference for C16-CoA substrate, while the SPTLC1-SPTLC3-SPTSSA isozyme uses both C14-CoA and C16-CoA as substrates, with a slight preference for C14-CoA. The SPTLC1-SPTLC2-SPTSSB complex shows a strong preference for C18-CoA substrate, while the SPTLC1-SPTLC3-SPTSSB isozyme displays an ability to use a broader range of acyl-CoAs, without apparent preference. Required for adipocyte cell viability and metabolic homeostasis. In Bos taurus (Bovine), this protein is Serine palmitoyltransferase 1 (SPTLC1).